The following is a 353-amino-acid chain: MSEPLKPRIDFEQPLQSLDEPVLKSAQAFDEQAAEKFYPAAPELDAEDEEGRVEGLVNAALKPKRSLWRKMVTAGMVILGASVIAQSVQWVNQAWQQQDWIALGATTAGGLIILAGVGSVVTEWRRLYHLRQRAEERDIARALLVSHGVGQGRVFCEKLARQAGLDQGHPALQRWQASLHETHNDREVVELYAKLVQPALDNQARAEISRYAAESALMIAVSPLALVDMAFIAWRNIRLINRIAALYGIELGYFSRIRLFRLVLLNIAFAGASELVREVGMDWLSQDLAARLSARAAQGIGAGLLTARLGIKAMELCRPLPWLEGDKPKLGDFRRQLMNQLKNTLPKKDKTAH.

Helical transmembrane passes span 71 to 91, 101 to 121, and 214 to 234; these read MVTA…VQWV, IALG…GSVV, and ESAL…FIAW.

It belongs to the UPF0283 family.

It localises to the cell inner membrane. The protein is UPF0283 membrane protein YPA_1696 of Yersinia pestis bv. Antiqua (strain Antiqua).